Consider the following 151-residue polypeptide: Ubiquitin-conjugating enzyme E2 2 (151 aa).

Positions methionine 1–alanine 26 are disordered. Positions serine 4–glutamate 150 constitute a UBC core domain. Catalysis depends on cysteine 88, which acts as the Glycyl thioester intermediate.

Belongs to the ubiquitin-conjugating enzyme family.

It is found in the cytoplasm. The protein resides in the nucleus. The catalysed reaction is S-ubiquitinyl-[E1 ubiquitin-activating enzyme]-L-cysteine + [E2 ubiquitin-conjugating enzyme]-L-cysteine = [E1 ubiquitin-activating enzyme]-L-cysteine + S-ubiquitinyl-[E2 ubiquitin-conjugating enzyme]-L-cysteine.. It functions in the pathway protein modification; protein ubiquitination. In terms of biological role, catalyzes the covalent attachment of ubiquitin to other proteins. Plays a role in transcription regulation by catalyzing the monoubiquitination of histone H2B to form H2BK123ub1. H2BK123ub1 gives a specific tag for epigenetic transcriptional activation and is also a prerequisite for H3K4me and H3K79me formation. Also involved in postreplication repair of UV-damaged DNA, in N-end rule-dependent protein degradation and in sporulation. The chain is Ubiquitin-conjugating enzyme E2 2 (uvsJ) from Emericella nidulans (strain FGSC A4 / ATCC 38163 / CBS 112.46 / NRRL 194 / M139) (Aspergillus nidulans).